The following is a 585-amino-acid chain: Tyramine beta-hydroxylase (585 aa).

The N-terminal stretch at 1-21 (MKCANAAALLFFVLCDIGVHG) is a signal peptide. Residues 31-142 (SNVTVKWQTD…GTTQFYIAAS (112 aa)) form the DOMON domain. Residues Asn32 and Asn71 are each glycosylated (N-linked (GlcNAc...) asparagine). Tyr206 is an active-site residue. 2 disulfides stabilise this stretch: Cys208-Cys258 and Cys247-Cys270. Cu(2+) is bound by residues His240 and His241. Cu(2+) is bound by residues His308, His386, and His388. 3 cysteine pairs are disulfide-bonded: Cys365-Cys477, Cys369-Cys534, and Cys440-Cys462. The active site involves His386. Asn449 is a glycosylation site (N-linked (GlcNAc...) asparagine). A Cu(2+)-binding site is contributed by Met461. Asn483 carries an N-linked (GlcNAc...) asparagine glycan.

It belongs to the copper type II ascorbate-dependent monooxygenase family. Requires Cu(2+) as cofactor.

It localises to the cytoplasmic vesicle. It is found in the secretory vesicle. Its subcellular location is the synaptic vesicle. It catalyses the reaction tyramine + L-ascorbate + O2 = (R)-octopamine + L-dehydroascorbate + H2O. In terms of biological role, catalyzes the hydroxylation of tyramine into octopamine, a neurotransmitter involved in pharyngeal pumping and egg laying. The protein is Tyramine beta-hydroxylase (tbh-1) of Caenorhabditis briggsae.